Consider the following 700-residue polypeptide: Chondroitinase-AC (700 aa).

An N-terminal signal peptide occupies residues 1–22; the sequence is MKKLFVTCIVFFSILSPALLIA. Catalysis depends on residues H225, Y234, and R288. The O-linked (Man...) serine glycan is linked to S328. Ca(2+) contacts are provided by E405, D407, D416, and Y417. Residue S455 is glycosylated (O-linked (Man...) serine).

This sequence belongs to the polysaccharide lyase 8 family. Monomer. Requires Ca(2+) as cofactor.

The catalysed reaction is Eliminative degradation of polysaccharides containing 1,4-beta-D-hexosaminyl and 1,3-beta-D-glucuronosyl linkages to disaccharides containing 4-deoxy-beta-D-gluc-4-enuronosyl groups.. The protein is Chondroitinase-AC (cslA) of Pedobacter heparinus (strain ATCC 13125 / DSM 2366 / CIP 104194 / JCM 7457 / NBRC 12017 / NCIMB 9290 / NRRL B-14731 / HIM 762-3).